Here is a 288-residue protein sequence, read N- to C-terminus: NAD(P)H-hydrate epimerase (288 aa).

The N-terminal 47 residues, 1-47, are a transit peptide targeting the mitochondrion; it reads MSRLRALLGLGLLVAGSRVPRIKSQTIACRSGPTWWGPQRLNSGGRW. Residue Ser-49 is modified to Phosphoserine. One can recognise a YjeF N-terminal domain in the interval 65–275; the sequence is AQAVDQELFN…ALEKKYQLNL (211 aa). 119–123 lines the (6S)-NADPHX pocket; sequence NNGGD. Asn-120 lines the K(+) pocket. Residue Lys-144 is modified to N6-succinyllysine. Asp-185 is a binding site for K(+). Residues 189–195 and Asp-218 each bind (6S)-NADPHX; that span reads GFSFKGD. Residue Ser-221 participates in K(+) binding.

Belongs to the NnrE/AIBP family. Homodimer. Interacts with APOA1 and APOA2. Requires K(+) as cofactor. Post-translationally, undergoes physiological phosphorylation during sperm capacitation, downstream to PKA activation. As to expression, ubiquitously expressed, with highest levels in kidney, heart and liver. Present in cerebrospinal fluid and urine but not in serum from healthy patients. Present in serum of sepsis patients (at protein level).

The protein resides in the mitochondrion. Its subcellular location is the secreted. It carries out the reaction (6R)-NADHX = (6S)-NADHX. The catalysed reaction is (6R)-NADPHX = (6S)-NADPHX. In terms of biological role, catalyzes the epimerization of the S- and R-forms of NAD(P)HX, a damaged form of NAD(P)H that is a result of enzymatic or heat-dependent hydration. This is a prerequisite for the S-specific NAD(P)H-hydrate dehydratase to allow the repair of both epimers of NAD(P)HX. Accelerates cholesterol efflux from endothelial cells to high-density lipoprotein (HDL) and thereby regulates angiogenesis. In Homo sapiens (Human), this protein is NAD(P)H-hydrate epimerase.